A 204-amino-acid polypeptide reads, in one-letter code: Holliday junction resolvase RecU (204 aa).

Positions 1-24 (MTIHYPNGQQPVQHYNTHNELPTP) are disordered. A compositionally biased stretch (polar residues) spans 7–24 (NGQQPVQHYNTHNELPTP). 4 residues coordinate Mg(2+): Thr-87, Asp-89, Asp-102, and Gln-121.

It belongs to the RecU family. The cofactor is Mg(2+).

It localises to the cytoplasm. It carries out the reaction Endonucleolytic cleavage at a junction such as a reciprocal single-stranded crossover between two homologous DNA duplexes (Holliday junction).. In terms of biological role, endonuclease that resolves Holliday junction intermediates in genetic recombination. Cleaves mobile four-strand junctions by introducing symmetrical nicks in paired strands. Promotes annealing of linear ssDNA with homologous dsDNA. Required for DNA repair, homologous recombination and chromosome segregation. The sequence is that of Holliday junction resolvase RecU from Limosilactobacillus reuteri (strain DSM 20016) (Lactobacillus reuteri).